We begin with the raw amino-acid sequence, 297 residues long: uncharacterized protein (297 aa).

Residues arginine 128 to phenylalanine 156 adopt a coiled-coil conformation.

This is an uncharacterized protein from Bacillus subtilis (strain 168).